We begin with the raw amino-acid sequence, 245 residues long: Probable transcriptional regulatory protein BF2589 (245 aa).

The disordered stretch occupies residues 225–245 (EDEDVQNVYTNMKPADNEGEE).

Belongs to the TACO1 family.

The protein localises to the cytoplasm. This is Probable transcriptional regulatory protein BF2589 from Bacteroides fragilis (strain ATCC 25285 / DSM 2151 / CCUG 4856 / JCM 11019 / LMG 10263 / NCTC 9343 / Onslow / VPI 2553 / EN-2).